Consider the following 578-residue polypeptide: A-type ATP synthase subunit A (578 aa).

Residue 228–235 coordinates ATP; it reads GPFGSGKT.

It belongs to the ATPase alpha/beta chains family. Has multiple subunits with at least A(3), B(3), C, D, E, F, H, I and proteolipid K(x).

It is found in the cell membrane. The catalysed reaction is ATP + H2O + 4 H(+)(in) = ADP + phosphate + 5 H(+)(out). Its function is as follows. Component of the A-type ATP synthase that produces ATP from ADP in the presence of a proton gradient across the membrane. The A chain is the catalytic subunit. This Methanosarcina acetivorans (strain ATCC 35395 / DSM 2834 / JCM 12185 / C2A) protein is A-type ATP synthase subunit A.